A 242-amino-acid chain; its full sequence is Ribosomal RNA small subunit methyltransferase G (242 aa).

Residues Gly-78, Phe-83, 129–130 (AE), and Arg-148 contribute to the S-adenosyl-L-methionine site.

It belongs to the methyltransferase superfamily. RNA methyltransferase RsmG family.

The protein localises to the cytoplasm. Functionally, specifically methylates the N7 position of a guanine in 16S rRNA. This is Ribosomal RNA small subunit methyltransferase G from Lachnoclostridium phytofermentans (strain ATCC 700394 / DSM 18823 / ISDg) (Clostridium phytofermentans).